Here is a 154-residue protein sequence, read N- to C-terminus: Transcriptional repressor NrdR (154 aa).

A zinc finger lies at 3 to 34 (CPHCHKNGSRVVDSRPSEDGSFIRRRRECIHC). The ATP-cone domain occupies 49–139 (LLVIKKDGTR…VYRQFKDVDA (91 aa)).

The protein belongs to the NrdR family. The cofactor is Zn(2+).

Its function is as follows. Negatively regulates transcription of bacterial ribonucleotide reductase nrd genes and operons by binding to NrdR-boxes. The sequence is that of Transcriptional repressor NrdR from Limosilactobacillus reuteri (strain DSM 20016) (Lactobacillus reuteri).